The primary structure comprises 364 residues: Fructose-bisphosphate aldolase B (364 aa).

At alanine 2 the chain carries N-acetylalanine. Lysine 13 carries the post-translational modification N6-succinyllysine. A Phosphoserine modification is found at serine 36. Threonine 39 is subject to Phosphothreonine. Arginine 43 provides a ligand contact to beta-D-fructose 1,6-bisphosphate. Threonine 119 is subject to Phosphothreonine. Lysine 121 is modified (N6-succinyllysine). Phosphoserine is present on serine 132. The active-site Proton acceptor is the glutamate 188. Lysine 230 serves as the catalytic Schiff-base intermediate with dihydroxyacetone-P. Phosphoserine is present on residues serine 272, serine 276, serine 299, and serine 301. A beta-D-fructose 1,6-bisphosphate-binding site is contributed by 272–274; the sequence is SGG. Arginine 304 contributes to the beta-D-fructose 1,6-bisphosphate binding site. Serine 309 carries the post-translational modification Phosphoserine. An N6-succinyllysine modification is found at lysine 317.

It belongs to the class I fructose-bisphosphate aldolase family. In terms of assembly, homotetramer. Interacts with BBS1, BBS2, BBS4 and BBS7. Forms a ternary complex with G6PD and TP53; this interaction is direct.

The protein localises to the cytoplasm. It localises to the cytosol. Its subcellular location is the cytoskeleton. The protein resides in the microtubule organizing center. It is found in the centrosome. The protein localises to the centriolar satellite. The catalysed reaction is beta-D-fructose 1,6-bisphosphate = D-glyceraldehyde 3-phosphate + dihydroxyacetone phosphate. The enzyme catalyses beta-D-fructose 1-phosphate = D-glyceraldehyde + dihydroxyacetone phosphate. Its pathway is carbohydrate degradation; glycolysis; D-glyceraldehyde 3-phosphate and glycerone phosphate from D-glucose: step 4/4. It participates in carbohydrate biosynthesis; gluconeogenesis. The protein operates within carbohydrate metabolism; fructose metabolism. Its function is as follows. Catalyzes the aldol cleavage of fructose 1,6-biphosphate to form two triosephosphates dihydroxyacetone phosphate and D-glyceraldehyde 3-phosphate in glycolysis as well as the reverse stereospecific aldol addition reaction in gluconeogenesis. In fructolysis, metabolizes fructose 1-phosphate derived from the phosphorylation of dietary fructose by fructokinase into dihydroxyacetone phosphate and D-glyceraldehyde. Acts as an adapter independently of its enzymatic activity, exerts a tumor suppressor role by stabilizing the ternary complex with G6PD and TP53 to inhibit G6PD activity and keep oxidative pentose phosphate metabolism in check. The sequence is that of Fructose-bisphosphate aldolase B (ALDOB) from Ovis aries (Sheep).